The following is a 111-amino-acid chain: Cornifelin homolog (111 aa).

The protein belongs to the cornifelin family.

The sequence is that of Cornifelin homolog (cnfn) from Xenopus tropicalis (Western clawed frog).